Here is a 285-residue protein sequence, read N- to C-terminus: 2-dehydro-3-deoxyphosphooctonate aldolase (285 aa).

This sequence belongs to the KdsA family.

Its subcellular location is the cytoplasm. It carries out the reaction D-arabinose 5-phosphate + phosphoenolpyruvate + H2O = 3-deoxy-alpha-D-manno-2-octulosonate-8-phosphate + phosphate. It participates in carbohydrate biosynthesis; 3-deoxy-D-manno-octulosonate biosynthesis; 3-deoxy-D-manno-octulosonate from D-ribulose 5-phosphate: step 2/3. The protein operates within bacterial outer membrane biogenesis; lipopolysaccharide biosynthesis. In Acinetobacter baylyi (strain ATCC 33305 / BD413 / ADP1), this protein is 2-dehydro-3-deoxyphosphooctonate aldolase.